The sequence spans 730 residues: LisH domain-containing protein ARMC9 (730 aa).

Residues 7 to 39 (HESELLGLVKEYLDFAEFEDTLKTFSKECKVKG) enclose the LisH domain. Positions 205–242 (SNNKEMLQQLHQQLLEAERRAMAYLKRYNKMQADYHSL) form a coiled coil. Serine 583 carries the phosphoserine modification. The disordered stretch occupies residues 675–730 (QNAQQARNGCPRPIPVAQPDDYKEGKRGVAGRATPSSCKSAECAEPVLSSGAQKPK).

As to quaternary structure, interacts with TOGARAM1, CCDC66, CEP104, CSPP1 and CEP290. Interacts with NDUFAF2.

The protein resides in the cytoplasm. Its subcellular location is the cytoskeleton. It localises to the cilium basal body. The protein localises to the cell projection. It is found in the cilium. The protein resides in the microtubule organizing center. Its subcellular location is the centrosome. It localises to the centriole. Functionally, involved in ciliogenesis. It is required for appropriate acetylation and polyglutamylation of ciliary microtubules, and regulation of cilium length. Acts as a positive regulator of hedgehog (Hh)signaling. May participate in the trafficking and/or retention of GLI2 and GLI3 proteins at the ciliary tip. This is LisH domain-containing protein ARMC9 (Armc9) from Rattus norvegicus (Rat).